Consider the following 364-residue polypeptide: SH3 and cysteine-rich domain-containing protein 3 (364 aa).

Disordered regions lie at residues 1 to 89 (MTEK…NDKP) and 189 to 244 (NKER…HKQP). A compositionally biased stretch (acidic residues) spans 64–78 (YEEEEEEEEEEEEPP). A Phorbol-ester/DAG-type zinc finger spans residues 89–140 (PHKFKDHFFKKPKFCDVCARMIVLNNKFGLRCKNCKTNIHEHCQSYVEMQRC). Positions 212–242 (ESARPEEGKPQDGNPEGDKKAEKKTPDDKHK) are enriched in basic and acidic residues. 2 consecutive SH3 domains span residues 247-306 (QQSH…RVRA) and 307-364 (GERV…LEEI).

As to quaternary structure, interacts (via SH3 domains) with the calcium channels CACNA1S and CACNA1C. Component of a calcium channel complex with CACNA1S and CACNB1. Component of a calcium channel complex with CACNA1C and CACNB1.

The protein resides in the cytoplasm. It is found in the cell membrane. Its subcellular location is the sarcolemma. It localises to the T-tubule. Its function is as follows. Required for normal excitation-contraction coupling in skeletal muscle and for normal muscle contraction in response to membrane depolarization. Required for normal Ca(2+) release from the sarcplasmic reticulum, which ultimately leads to muscle contraction. Probably functions via its effects on muscle calcium channels. Increases CACNA1S channel activity, in addition to its role in enhancing the expression of CACNA1S at the cell membrane. Has a redundant role in promoting the expression of the calcium channel CACNA1S at the cell membrane. Slows down the inactivation rate of the calcium channel CACNA1C. In Homo sapiens (Human), this protein is SH3 and cysteine-rich domain-containing protein 3 (STAC3).